Reading from the N-terminus, the 329-residue chain is Biotin--protein ligase 2 (329 aa).

The region spanning 67–251 (ISTHRFGRFL…KFENFFDLFM (185 aa)) is the BPL/LPL catalytic domain. Biotin-binding positions include 84–85 (ST), Gln-107, 111–113 (RGR), and Lys-182.

The protein belongs to the biotin--protein ligase family. Highly expressed in seeds. Expressed in roots, leaves, stems, flowers and siliques.

Its subcellular location is the cytoplasm. Seems to have no or limited implication in biotin-dependent carboxylase biotinylation in planta. This chain is Biotin--protein ligase 2 (HCS2), found in Arabidopsis thaliana (Mouse-ear cress).